Consider the following 383-residue polypeptide: Deoxyguanosinetriphosphate triphosphohydrolase-like protein (383 aa).

Residues 62–198 (RLTHSLEVST…ASLADDISYI (137 aa)) form the HD domain.

It belongs to the dGTPase family. Type 2 subfamily.

In Rickettsia prowazekii (strain Madrid E), this protein is Deoxyguanosinetriphosphate triphosphohydrolase-like protein.